The following is a 173-amino-acid chain: Mediator of RNA polymerase II transcription subunit 10 (173 aa).

Positions 1-10 are enriched in low complexity; sequence MVQQQQQSQQ. Residues 1-42 are disordered; it reads MVQQQQQSQQRMMELHERNDREKLARKTEKEREEERRKQEDD. Basic and acidic residues predominate over residues 13–42; that stretch reads MELHERNDREKLARKTEKEREEERRKQEDD.

This sequence belongs to the Mediator complex subunit 10 family. As to quaternary structure, component of the Mediator complex.

The protein resides in the nucleus. Component of the Mediator complex, a coactivator involved in the regulated transcription of nearly all RNA polymerase II-dependent genes. Mediator functions as a bridge to convey information from gene-specific regulatory proteins to the basal RNA polymerase II transcription machinery. Mediator is recruited to promoters by direct interactions with regulatory proteins and serves as a scaffold for the assembly of a functional preinitiation complex with RNA polymerase II and the general transcription factors. Required for germ cell development and for transcriptional activation of certain stage-specific inducible promoters. The chain is Mediator of RNA polymerase II transcription subunit 10 (mdt-10) from Caenorhabditis elegans.